We begin with the raw amino-acid sequence, 329 residues long: GTP 3',8-cyclase (329 aa).

Positions 8–234 (AFARKFYYLR…QLRSRADGPA (227 aa)) constitute a Radical SAM core domain. A GTP-binding site is contributed by Arg17. Positions 24 and 28 each coordinate [4Fe-4S] cluster. Residue Tyr30 participates in S-adenosyl-L-methionine binding. Cys31 is a [4Fe-4S] cluster binding site. Arg68 is a binding site for GTP. Gly72 contacts S-adenosyl-L-methionine. Thr99 contacts GTP. Ser123 lines the S-adenosyl-L-methionine pocket. Residue Lys160 coordinates GTP. Residue Met194 participates in S-adenosyl-L-methionine binding. [4Fe-4S] cluster contacts are provided by Cys257 and Cys260. 262–264 (RLR) lines the GTP pocket. Position 274 (Cys274) interacts with [4Fe-4S] cluster.

It belongs to the radical SAM superfamily. MoaA family. As to quaternary structure, monomer and homodimer. The cofactor is [4Fe-4S] cluster.

The catalysed reaction is GTP + AH2 + S-adenosyl-L-methionine = (8S)-3',8-cyclo-7,8-dihydroguanosine 5'-triphosphate + 5'-deoxyadenosine + L-methionine + A + H(+). The protein operates within cofactor biosynthesis; molybdopterin biosynthesis. Its function is as follows. Catalyzes the cyclization of GTP to (8S)-3',8-cyclo-7,8-dihydroguanosine 5'-triphosphate. The protein is GTP 3',8-cyclase of Cronobacter sakazakii (strain ATCC BAA-894) (Enterobacter sakazakii).